The sequence spans 222 residues: Putative serine proteinase inhibitor 2 homolog second part (222 aa).

The protein belongs to the serpin family. Poxviruses subfamily.

The polypeptide is Putative serine proteinase inhibitor 2 homolog second part (Homo sapiens (Human)).